Consider the following 258-residue polypeptide: Ribosomal RNA small subunit methyltransferase A (258 aa).

Residues H13, L15, G40, E62, D87, and N108 each coordinate S-adenosyl-L-methionine.

This sequence belongs to the class I-like SAM-binding methyltransferase superfamily. rRNA adenine N(6)-methyltransferase family. RsmA subfamily.

The protein localises to the cytoplasm. It carries out the reaction adenosine(1518)/adenosine(1519) in 16S rRNA + 4 S-adenosyl-L-methionine = N(6)-dimethyladenosine(1518)/N(6)-dimethyladenosine(1519) in 16S rRNA + 4 S-adenosyl-L-homocysteine + 4 H(+). In terms of biological role, specifically dimethylates two adjacent adenosines (A1518 and A1519) in the loop of a conserved hairpin near the 3'-end of 16S rRNA in the 30S particle. May play a critical role in biogenesis of 30S subunits. The sequence is that of Ribosomal RNA small subunit methyltransferase A from Sulfurihydrogenibium sp. (strain YO3AOP1).